Here is a 267-residue protein sequence, read N- to C-terminus: X-box-binding protein 1 (267 aa).

At 1-180 (MVVVAAAPSA…VQAQLSPPQN (180 aa)) the chain is on the cytoplasmic side. Residues 35–60 (VPGPRAAGSEASGTPQARKRQRLTHL) are disordered. Ser-61 carries the phosphoserine modification. The bZIP domain occupies 63–126 (EEKALRRKLK…HGLVIENQEL (64 aa)). Residues 65-87 (KALRRKLKNRVAAQTARDRKKAR) are basic motif. Residues 69–85 (RKLKNRVAAQTARDRKK) form a nuclear localization signal (NLS) region. The interval 91 to 126 (LEQQVVDLEEENQKLQLENQLLREKTHGLVIENQEL) is leucine-zipper. Residues 181 to 198 (IFPWILTLLPLQILSLIS) traverse the membrane as a helical; Signal-anchor for type II membrane protein segment. At 199 to 267 (FWAFWTSWTL…FVLTMYTPSL (69 aa)) the chain is on the lumenal side.

This sequence belongs to the bZIP family. In terms of assembly, isoform 1 interacts with HM13. Isoform 1 interacts with RNF139; the interaction induces ubiquitination and degradation of isoform 1. Isoform 1 interacts (via luminal domain) with DERL1; the interaction obviates the need for ectodomain shedding prior HM13/SPP-mediated XBP1 isoform 1 cleavage. Isoform 1 interacts with HDAC3 and AKT1; the interactions occur in endothelial cell (EC) under disturbed flow. Isoform 1 interacts with the oncoprotein FOS. Interacts with SIRT1. Post-translationally, isoform 1 is ubiquitinated, leading to proteasome-mediated degradation in response to ER stress. X-box-binding protein 1, cytoplasmic form and luminal form are produced by intramembrane proteolytic cleavage of ER membrane-anchored isoform 1 triggered by HM13/SPP in a DERL1-RNF139-dependent and VCP/p97-independent manner. X-box-binding protein 1, luminal form is ubiquitinated leading to proteasomal degradation. In terms of processing, acetylated by EP300; acetylation positively regulates the transcriptional activity of XBP1. Deacetylated by SIRT1; deacetylation negatively regulates the transcriptional activity of XBP1.

The protein localises to the nucleus. It localises to the endoplasmic reticulum. Its subcellular location is the cytoplasm. The protein resides in the endoplasmic reticulum membrane. It is found in the membrane. In terms of biological role, functions as a transcription factor during endoplasmic reticulum (ER) stress by regulating the unfolded protein response (UPR). Required for cardiac myogenesis and hepatogenesis during embryonic development, and the development of secretory tissues such as exocrine pancreas and salivary gland. Involved in terminal differentiation of B lymphocytes to plasma cells and production of immunoglobulins. Modulates the cellular response to ER stress in a PIK3R-dependent manner. Binds to the cis-acting X box present in the promoter regions of major histocompatibility complex class II genes. Involved in VEGF-induced endothelial cell (EC) proliferation and retinal blood vessel formation during embryonic development but also for angiogenesis in adult tissues under ischemic conditions. Functions also as a major regulator of the UPR in obesity-induced insulin resistance and type 2 diabetes for the management of obesity and diabetes prevention. Acts as a weak transcriptional factor. Together with HDAC3, contributes to the activation of NFE2L2-mediated HMOX1 transcription factor gene expression in a PI(3)K/mTORC2/Akt-dependent signaling pathway leading to EC survival under disturbed flow/oxidative stress. Binds to the ER stress response element (ERSE) upon ER stress. Binds to the consensus 5'-GATGACGTG[TG]N(3)[AT]T-3' sequence related to cAMP responsive element (CRE)-like sequences. Associates preferentially to the HDAC3 gene promoter region in a static flow-dependent manner. Binds to the CDH5/VE-cadherin gene promoter region. In Rattus norvegicus (Rat), this protein is X-box-binding protein 1.